Reading from the N-terminus, the 270-residue chain is Phosphatidate cytidylyltransferase (270 aa).

7 helical membrane passes run 19–39 (LWLTWVGGVGFTLFSIAIGLA), 53–73 (TAFSRLFGWAWLIVTGILLIL), 76–96 (GALLTIGFLVAGCAILLVTQW), 101–121 (GWPAAGLFYAGFSALSLSLLR), 126–146 (FGFTTIVFLFAVVWSTDIAAY), 183–203 (LVASLVAAPGGWGVPVLALLL), and 248–268 (ALLYLFGAIFAEPDVPSAIFF).

Belongs to the CDS family.

Its subcellular location is the cell inner membrane. It carries out the reaction a 1,2-diacyl-sn-glycero-3-phosphate + CTP + H(+) = a CDP-1,2-diacyl-sn-glycerol + diphosphate. The protein operates within phospholipid metabolism; CDP-diacylglycerol biosynthesis; CDP-diacylglycerol from sn-glycerol 3-phosphate: step 3/3. The polypeptide is Phosphatidate cytidylyltransferase (cdsA) (Brucella melitensis biotype 1 (strain ATCC 23456 / CCUG 17765 / NCTC 10094 / 16M)).